A 211-amino-acid polypeptide reads, in one-letter code: Probable metallo-hydrolase YqgX (211 aa).

7 residues coordinate Zn(2+): histidine 54, histidine 56, aspartate 58, histidine 59, histidine 130, aspartate 149, and histidine 190.

The protein belongs to the metallo-beta-lactamase superfamily. Glyoxalase II family. It depends on Zn(2+) as a cofactor.

The sequence is that of Probable metallo-hydrolase YqgX (yqgX) from Bacillus subtilis (strain 168).